An 878-amino-acid chain; its full sequence is Aminopeptidase M1-A (878 aa).

Residues 105 to 212 are required for membrane association; it reads VGEGTLVIAF…MSTYLVAVIV (108 aa). Substrate is bound by residues E145 and 278–282; that span reads GAMEN. H314 provides a ligand contact to Zn(2+). E315 (proton acceptor) is an active-site residue. Residues H318 and E337 each contribute to the Zn(2+) site. The Dileucine internalization motif signature appears at 727–728; it reads LL.

The protein belongs to the peptidase M1 family. Homodimer. Zn(2+) serves as cofactor.

It is found in the membrane. The protein localises to the microsome membrane. Its subcellular location is the cytoplasm. It catalyses the reaction Release of an N-terminal amino acid, Xaa-|-Yaa- from a peptide, amide or arylamide. Xaa is preferably Ala, but may be most amino acids including Pro (slow action). When a terminal hydrophobic residue is followed by a prolyl residue, the two may be released as an intact Xaa-Pro dipeptide.. The polypeptide is Aminopeptidase M1-A (Oryza sativa subsp. japonica (Rice)).